The chain runs to 437 residues: Sonic hedgehog protein (437 aa).

A signal peptide spans 1 to 24; sequence MLLLLARCFLVILASSLLVCPGLA. A lipid anchor (N-palmitoyl cysteine) is attached at Cys-25. The short motif at 33-39 is the Cardin-Weintraub element; that stretch reads KRRHPKK. Ca(2+)-binding residues include Glu-90, Glu-91, Asp-96, Thr-126, Glu-127, Asp-130, and Asp-132. Zn(2+)-binding residues include His-141, Asp-148, and His-183. Gly-198 is lipidated: Cholesterol glycine ester. N-linked (GlcNAc...) asparagine glycosylation occurs at Asn-279.

It belongs to the hedgehog family. As to quaternary structure, interacts with HHATL/GUP1 which negatively regulates HHAT-mediated palmitoylation of the SHH N-terminus. Interacts with BOC and CDON. Interacts with HHIP. Interacts with DISP1 via its cholesterol anchor. Interacts with SCUBE2. Interacts with glypican GPC3. Multimer. The C-terminal domain displays an autoproteolysis activity and a cholesterol transferase activity. Both activities result in the cleavage of the full-length protein and covalent attachment of a cholesterol moiety to the C-terminal of the newly generated N-terminal fragment (ShhN). Cholesterylation is required for the sonic hedgehog protein N-product targeting to lipid rafts and multimerization. ShhN is the active species in both local and long-range signaling, whereas the C-product (ShhC) is degraded in the endoplasmic reticulum. Post-translationally, N-palmitoylation by HHAT of ShhN is required for sonic hedgehog protein N-product multimerization and full activity. It is a prerequisite for the membrane-proximal positioning and the subsequent shedding of this N-terminal peptide. In terms of processing, the lipidated N- and C-terminal peptides of ShhNp can be cleaved (shedding). The N-terminal palmitoylated peptide is cleaved at the Cardin-Weintraub (CW) motif site. The cleavage reduced the interactions with heparan sulfate. The cleavage is enhanced by SCUBE2. Expressed in a number of embryonic tissues including the notochord, ventral neural tube, floor plate, lung bud, zone of polarizing activity and posterior distal mesenchyme of limbs. In the adult, expressed in lung and neural retina.

It localises to the endoplasmic reticulum membrane. The protein localises to the golgi apparatus membrane. Its subcellular location is the cell membrane. The enzyme catalyses glycyl-L-cysteinyl-[protein] + cholesterol + H(+) = [protein]-C-terminal glycyl cholesterol ester + N-terminal L-cysteinyl-[protein]. Functionally, the C-terminal part of the sonic hedgehog protein precursor displays an autoproteolysis and a cholesterol transferase activity. Both activities result in the cleavage of the full-length protein into two parts (ShhN and ShhC) followed by the covalent attachment of a cholesterol moiety to the C-terminal of the newly generated ShhN. Both activities occur in the reticulum endoplasmic. Once cleaved, ShhC is degraded in the endoplasmic reticulum. Its function is as follows. The dually lipidated sonic hedgehog protein N-product (ShhNp) is a morphogen which is essential for a variety of patterning events during development. Induces ventral cell fate in the neural tube and somites. Involved in the patterning of the anterior-posterior axis of the developing limb bud. Essential for axon guidance. Binds to the patched (PTCH1) receptor, which functions in association with smoothened (SMO), to activate the transcription of target genes. In the absence of SHH, PTCH1 represses the constitutive signaling activity of SMO. The polypeptide is Sonic hedgehog protein (Mus musculus (Mouse)).